The following is a 42-amino-acid chain: MGDILTGVSGAEAATAMIAAAAIIALVGFTKWGAKKVASFFG.

Over 1 to 12 the chain is Periplasmic; sequence MGDILTGVSGAE. A helical transmembrane segment spans residues 13 to 34; it reads AATAMIAAAAIIALVGFTKWGA. Topologically, residues 35–42 are cytoplasmic; that stretch reads KKVASFFG.

Belongs to the inovirus capsid protein family. In terms of assembly, homomultimerizes. There are several thousands of this protein in the phage capsid.

The protein localises to the virion. It localises to the host membrane. Its function is as follows. Self assembles to form a helical capsid wrapping up the viral genomic DNA. The capsid displays a filamentous structure with a length of 760-1950 nm and a width of 6-8 nm. The virion assembly and budding take place at the host inner membrane. This is Capsid protein G8P (VIII) from Xanthomonas phage phiLf (Bacteriophage phi-Lf).